The primary structure comprises 153 residues: Fucose mutarotase (153 aa).

The active-site Proton donor is the H24. D32 contributes to the substrate binding site. D69 is a catalytic residue. Residues M79, Y120, Y138, and N140 each contribute to the substrate site. Residue Y120 is part of the active site.

This sequence belongs to the RbsD / FucU family. In terms of assembly, mainly homodimer, but also exists as homotetramer, homooctamer, and homodecamer. The homodimeric form seems catalytically inactive. In terms of tissue distribution, widely expressed in various tissues and cell lines, including kidney, liver, and pancreas, marginally in muscle and testis.

It carries out the reaction alpha-L-fucose = beta-L-fucose. It participates in carbohydrate metabolism; L-fucose metabolism. Functionally, involved in the interconversion between alpha- and beta-L-fucoses. L-Fucose (6-deoxy-L-galactose) exists as alpha-L-fucose (29.5%) and beta-L-fucose (70.5%), the beta-form is metabolized through the salvage pathway. GDP-L-fucose formed either by the de novo or salvage pathways is transported into the endoplasmic reticulum, where it serves as a substrate for N- and O-glycosylations by fucosyltransferases. Fucosylated structures expressed on cell surfaces or secreted in biological fluids are believed to play a critical role in cell-cell adhesion and recognition processes. The polypeptide is Fucose mutarotase (Fuom) (Mus musculus (Mouse)).